The chain runs to 528 residues: Propionate catabolism operon regulatory protein (528 aa).

Residues 218–461 (MLGQSPQMEQ…RNMMERLALF (244 aa)) form the Sigma-54 factor interaction domain. 318–327 (AHGGTLFLDE) serves as a coordination point for ATP. Positions 508–527 (KTAAANYLGISRTTFWRRLK) form a DNA-binding region, H-T-H motif.

Its function is as follows. Involved in the transcriptional regulation of the propionate catabolism operon. In Escherichia coli (strain K12), this protein is Propionate catabolism operon regulatory protein (prpR).